Here is a 110-residue protein sequence, read N- to C-terminus: uncharacterized protein (110 aa).

This is an uncharacterized protein from Saccharomyces cerevisiae (strain ATCC 204508 / S288c) (Baker's yeast).